We begin with the raw amino-acid sequence, 252 residues long: 5'-nucleotidase SurE (252 aa).

4 residues coordinate a divalent metal cation: Asp8, Asp9, Ser39, and Asn95.

It belongs to the SurE nucleotidase family. The cofactor is a divalent metal cation.

It is found in the cytoplasm. It catalyses the reaction a ribonucleoside 5'-phosphate + H2O = a ribonucleoside + phosphate. Nucleotidase that shows phosphatase activity on nucleoside 5'-monophosphates. In Clostridium botulinum (strain Loch Maree / Type A3), this protein is 5'-nucleotidase SurE.